Consider the following 350-residue polypeptide: UDP-3-O-acylglucosamine N-acyltransferase (350 aa).

Catalysis depends on His-244, which acts as the Proton acceptor.

The protein belongs to the transferase hexapeptide repeat family. LpxD subfamily. In terms of assembly, homotrimer.

The catalysed reaction is a UDP-3-O-[(3R)-3-hydroxyacyl]-alpha-D-glucosamine + a (3R)-hydroxyacyl-[ACP] = a UDP-2-N,3-O-bis[(3R)-3-hydroxyacyl]-alpha-D-glucosamine + holo-[ACP] + H(+). It participates in bacterial outer membrane biogenesis; LPS lipid A biosynthesis. Catalyzes the N-acylation of UDP-3-O-acylglucosamine using 3-hydroxyacyl-ACP as the acyl donor. Is involved in the biosynthesis of lipid A, a phosphorylated glycolipid that anchors the lipopolysaccharide to the outer membrane of the cell. The protein is UDP-3-O-acylglucosamine N-acyltransferase of Herminiimonas arsenicoxydans.